A 552-amino-acid chain; its full sequence is Glutamine-dependent NAD(+) synthetase (552 aa).

Residues 5–245 (FRITLAQLNP…EAVVHVDLER (241 aa)) enclose the CN hydrolase domain. E45 acts as the Proton acceptor; for glutaminase activity in catalysis. K113 functions as the For glutaminase activity in the catalytic mechanism. Catalysis depends on C149, which acts as the Nucleophile; for glutaminase activity. L-glutamine-binding residues include S175 and K181. Positions 275-552 (LQDYLRKSGF…PMVNRWRDQS (278 aa)) are ligase. 290–297 (GLSGGIDS) is an ATP binding site. Position 373 (N373) interacts with deamido-NAD(+). Position 397 (T397) interacts with ATP. The deamido-NAD(+) site is built by E402 and K521.

In the C-terminal section; belongs to the NAD synthetase family.

The enzyme catalyses deamido-NAD(+) + L-glutamine + ATP + H2O = L-glutamate + AMP + diphosphate + NAD(+) + H(+). It participates in cofactor biosynthesis; NAD(+) biosynthesis; NAD(+) from deamido-NAD(+) (L-Gln route): step 1/1. Functionally, catalyzes the ATP-dependent amidation of deamido-NAD to form NAD. Uses L-glutamine as a nitrogen source. This chain is Glutamine-dependent NAD(+) synthetase, found in Rhodobacter capsulatus (Rhodopseudomonas capsulata).